Here is a 52-residue protein sequence, read N- to C-terminus: uncharacterized protein (52 aa).

Residues 1–52 (MSLRPCLTPSSMQYSDIYIPTPTPTHHTHTPTPHPHPHTHTHTHHNPNPTLF) form a disordered region. Residues 35–45 (PHPHTHTHTHH) are compositionally biased toward basic residues.

This is an uncharacterized protein from Saccharomyces cerevisiae (strain ATCC 204508 / S288c) (Baker's yeast).